The following is a 400-amino-acid chain: Acetate kinase (400 aa).

Asn-10 provides a ligand contact to Mg(2+). Position 17 (Lys-17) interacts with ATP. Arg-91 lines the substrate pocket. The active-site Proton donor/acceptor is Asp-150. ATP contacts are provided by residues 210 to 214 (HLGNG), 285 to 287 (DCR), and 333 to 337 (GIGEN). Glu-387 contacts Mg(2+).

Belongs to the acetokinase family. In terms of assembly, homodimer. The cofactor is Mg(2+). Mn(2+) is required as a cofactor.

It is found in the cytoplasm. The catalysed reaction is acetate + ATP = acetyl phosphate + ADP. The protein operates within metabolic intermediate biosynthesis; acetyl-CoA biosynthesis; acetyl-CoA from acetate: step 1/2. Catalyzes the formation of acetyl phosphate from acetate and ATP. Can also catalyze the reverse reaction. The sequence is that of Acetate kinase from Pectobacterium carotovorum subsp. carotovorum (strain PC1).